An 833-amino-acid chain; its full sequence is V-type proton ATPase 116 kDa subunit a 4 (833 aa).

Over 1–390 (MASVFRSEEM…DAYGVGSYRE (390 aa)) the chain is Cytoplasmic. A helical transmembrane segment spans residues 391-409 (INPAPYTIITFPFLFAVMF). The Vacuolar portion of the chain corresponds to 410–411 (GD). The chain crosses the membrane as a helical span at residues 412–428 (CGHGMVMLMAALWMVLN). Residues 429–443 (ERHLLAQKSTNEMWN) are Cytoplasmic-facing. Residues 444–473 (IFFNGRYLILLMGIFSIYTGLIYNDCFSKS) traverse the membrane as a helical segment. At 474 to 538 (FNIFGSSWSV…ASNKLTFLNS (65 aa)) the chain is on the vacuolar side. A helical transmembrane segment spans residues 539–558 (YKMKMSVILGIAHMIFGVIL). Topologically, residues 559–576 (SLFNHIYFRRTLNIILQF) are cytoplasmic. The chain crosses the membrane as a helical span at residues 577–597 (IPEMIFMLSLFGYLVFMIIFK). The Vacuolar segment spans residues 598–642 (WCRYDAHTSRKAPSILIHFIGMFLFDYDDSSNAPLYGHQQEVQTF). A helical transmembrane segment spans residues 643-662 (FVIIALVSVPWMLLIKPFVL). The Cytoplasmic segment spans residues 663–720 (RAKHQKSQLQSFTIHEDAVEGDHSGHSSKKTAGAHGMKDGHEEEFNFGDIFVHQAIHT). The segment at 681 to 700 (VEGDHSGHSSKKTAGAHGMK) is disordered. A helical membrane pass occupies residues 721–745 (IEYCLGCISNTASYLRLWALSLAHA). Over 746 to 766 (ELSEVLWTMVMSIGLRLQGWA) the chain is Vacuolar. Residues 767–805 (GLVGVFIIFAVFAVLTVAILLVMEGLSAFLHALRLHWVE) traverse the membrane as a helical segment. Over 806 to 833 (FQNKFYEGAGSKFSPFSFKHVLEGTAEE) the chain is Cytoplasmic.

Belongs to the V-ATPase 116 kDa subunit family. In terms of assembly, V-ATPase is a heteromultimeric enzyme made up of two complexes: the ATP-hydrolytic V1 complex and the proton translocation V0 complex. The V1 complex consists of three catalytic AB heterodimers that form a heterohexamer, three peripheral stalks each consisting of EG heterodimers, one central rotor including subunits D and F, and the regulatory subunits C and H. The proton translocation complex V0 consists of the proton transport subunit a, a ring of proteolipid subunits c9c'', rotary subunit d, subunits e and f, and the accessory subunits ATP6AP1/Ac45 and ATP6AP2/PRR. Interacts with the V1 complex V-ATPase subunit A ATP6V1A. Interacts with the V0 complex V-ATPase subunit c ATP6V0C. As to expression, specifically expressed in kidney, but not in the heart, brain, spleen, lung, liver, muscle, or testis. Distribution within the kidney appears more widespread than that seen in man. High intensity staining at the surface of intercalated cells, with additional expression in the proximal tubule.

It is found in the apical cell membrane. Its subcellular location is the basolateral cell membrane. Functionally, subunit of the V0 complex of vacuolar(H+)-ATPase (V-ATPase), a multisubunit enzyme composed of a peripheral complex (V1) that hydrolyzes ATP and a membrane integral complex (V0) that translocates protons. V-ATPase is responsible for acidifying and maintaining the pH of intracellular compartments and in some cell types, is targeted to the plasma membrane, where it is responsible for acidifying the extracellular environment. Involved in normal vectorial acid transport into the urine by the kidney. In Mus musculus (Mouse), this protein is V-type proton ATPase 116 kDa subunit a 4 (Atp6v0a4).